The chain runs to 859 residues: Protein O-mannosyl-transferase Tmtc1 (859 aa).

Residues 1–22 (MHTPKCRRPSMSATLSHKDLAG) are Cytoplasmic-facing. Residues 23 to 43 (LAGCSALAFVLYLNTLNAGFV) form a helical membrane-spanning segment. Residues 44-103 (YDDRRAILANGDVTGARPLANLLRNDFWGTPLVDSGSHGSWRPLCVLSFRLNYLAGGMTP) are Extracellular-facing. Residues 104-124 (LGYHLVNVMLHCVATWLVFLV) traverse the membrane as a helical segment. Over 125-134 (ARTLLPSRMG) the chain is Cytoplasmic. A run of 2 helical transmembrane segments spans residues 135 to 154 (VLAA…AVAG) and 155 to 174 (LVGR…YLSY). The Cytoplasmic segment spans residues 175 to 189 (RRHMLNREWGSLILT). The chain crosses the membrane as a helical span at residues 190-210 (IMLALAALLCKETAITALLLC). The Extracellular segment spans residues 211–245 (GLCDVLSPVGRENSDKVCDGSISGLASFNFQRRFR). A helical membrane pass occupies residues 246–266 (SLSILGFTLLCGLYCRLSLLP). Over 267–288 (RPSTAFSAADNPTAHESCFWTR) the chain is Cytoplasmic. The helical transmembrane segment at 289–309 (TLTFLYLPVANFGILLWPQEL) threads the bilayer. Over 310-328 (SFDWGMEAVSRIRTLWDAR) the chain is Extracellular. Residues 329-349 (NILTAGFYGSLVAILWKGSGL) form a helical membrane-spanning segment. At 350-422 (RSAASPMDFA…SWTAAPILGT (73 aa)) the chain is on the cytoplasmic side. A helical membrane pass occupies residues 423-443 (AFLVLPFLPASNLLFYVGFVM). Topologically, residues 444-446 (AER) are extracellular. Residues 447-467 (VLYLPSVGYCLLFGLGFGHLW) traverse the membrane as a helical segment. The Cytoplasmic segment spans residues 468 to 473 (QRVNSS). A helical transmembrane segment spans residues 474-493 (WRSRLMLLCGLALLLGVHGV). Residues 494 to 859 (RTFRRNLDWR…RMNVHKHENE (366 aa)) lie on the Extracellular side of the membrane. TPR repeat units follow at residues 518–551 (PKAL…RPTM), 552–585 (ADAH…RPQL), 586–620 (AVAY…EGSG), 632–665 (YTCY…LPLL), 671–704 (AVLH…QPEQ), 705–739 (GAAY…APLE), 740–773 (PSSH…APQD), 774–807 (YTLQ…QPMA), and 808–841 (AHAH…QPGH). Asparagine 567 is a glycosylation site (N-linked (GlcNAc...) asparagine). The N-linked (GlcNAc...) asparagine glycan is linked to asparagine 718.

The protein belongs to the TMTC family.

The protein resides in the membrane. It localises to the endoplasmic reticulum. The catalysed reaction is a di-trans,poly-cis-dolichyl beta-D-mannosyl phosphate + L-seryl-[protein] = 3-O-(alpha-D-mannosyl)-L-seryl-[protein] + a di-trans,poly-cis-dolichyl phosphate + H(+). The enzyme catalyses a di-trans,poly-cis-dolichyl beta-D-mannosyl phosphate + L-threonyl-[protein] = 3-O-(alpha-D-mannosyl)-L-threonyl-[protein] + a di-trans,poly-cis-dolichyl phosphate + H(+). Its pathway is protein modification; protein glycosylation. In terms of biological role, transfers mannosyl residues to the hydroxyl group of serine or threonine residues. The polypeptide is Protein O-mannosyl-transferase Tmtc1 (Drosophila melanogaster (Fruit fly)).